A 701-amino-acid polypeptide reads, in one-letter code: ER-retained PMA1-suppressing protein 1 (701 aa).

The N-terminal stretch at 1-27 (MKMNLKRLVVTFFSCITFLLKFTIAAA) is a signal peptide. The region spanning 28–142 (EPPEGFPEPL…LIAFARRESM (115 aa)) is the Thioredoxin 1 domain. An intrachain disulfide couples Cys-60 to Cys-63. Residue Asn-85 is glycosylated (N-linked (GlcNAc...) asparagine). Cys-200 and Cys-203 are joined by a disulfide. N-linked (GlcNAc...) asparagine glycosylation is found at Asn-264, Asn-299, and Asn-370. The Thioredoxin 2 domain maps to 408-446 (PTFFMFKDGDPISYVFPGYSTTEMRNIDAIMDWVKKYSN). The helical transmembrane segment at 646–666 (IIHGNGMPGYLIVIVLFIAIL) threads the bilayer.

It belongs to the protein disulfide isomerase family. In terms of assembly, interacts with mutated PMA1-D378N but not wild type PMA1. Interacts with EUG1, KAR2, MPD1 and PDI1.

It localises to the endoplasmic reticulum membrane. The catalysed reaction is Catalyzes the rearrangement of -S-S- bonds in proteins.. Functionally, acts as a membrane-bound chaperone in endoplasmic reticulum quality control. Probably facilitates presentation of substrate to membrane-bound components of the degradation machinery. The polypeptide is ER-retained PMA1-suppressing protein 1 (EPS1) (Saccharomyces cerevisiae (strain ATCC 204508 / S288c) (Baker's yeast)).